We begin with the raw amino-acid sequence, 270 residues long: MRNIALRIEYDGTDFVGSQWQTNGRSVQGALEAAWQQLTGERRRMILAGRTDAGVHARGQVANVSTNTRHSLATIIRGLNGVLPEDIGILAAWEVPEEFHARYSAVRREYRYVIDNGRTPSPLLRRHAAYVPRRLDVAAMDRAIQQVIGTHDFAPLSDGPQEGSTVRICYDARCTCTEVWGQPLVLIDVAANAFLRHMVRNLVGTLIQVGEGRIDADGFAAVLAGANRRARVLAPAHGLYLMAVRYPEDGNAAADTLVAAVGVTETRMQL.

Residue aspartate 52 is the Nucleophile of the active site. Position 110 (tyrosine 110) interacts with substrate.

The protein belongs to the tRNA pseudouridine synthase TruA family. In terms of assembly, homodimer.

The enzyme catalyses uridine(38/39/40) in tRNA = pseudouridine(38/39/40) in tRNA. In terms of biological role, formation of pseudouridine at positions 38, 39 and 40 in the anticodon stem and loop of transfer RNAs. This chain is tRNA pseudouridine synthase A, found in Roseiflexus castenholzii (strain DSM 13941 / HLO8).